We begin with the raw amino-acid sequence, 357 residues long: Selenide, water dikinase (357 aa).

C25 is an active-site residue. Residues K28 and 57-59 contribute to the ATP site; that span reads TAD. D60 lines the Mg(2+) pocket. ATP-binding positions include D77, D100, and 148 to 150; that span reads GHS. D100 contacts Mg(2+). Mg(2+) is bound at residue D236.

Belongs to the selenophosphate synthase 1 family. Class I subfamily. Homodimer. It depends on Mg(2+) as a cofactor.

It carries out the reaction hydrogenselenide + ATP + H2O = selenophosphate + AMP + phosphate + 2 H(+). Functionally, synthesizes selenophosphate from selenide and ATP. The chain is Selenide, water dikinase from Pseudomonas straminea.